The following is a 234-amino-acid chain: Sugar fermentation stimulation protein homolog (234 aa).

This sequence belongs to the SfsA family.

The polypeptide is Sugar fermentation stimulation protein homolog (Bartonella quintana (strain Toulouse) (Rochalimaea quintana)).